Here is a 320-residue protein sequence, read N- to C-terminus: Integrin-binding sialoprotein (320 aa).

The signal sequence occupies residues 1 to 16 (MKTALILLCILGMASA). Residues S31, S68, S76, S77, and S96 each carry the phosphoserine modification. Disordered regions lie at residues 60 to 117 (PVQG…VTAS), 136 to 225 (LPKK…RELT), and 238 to 264 (FQQTTPPPEAYGTTSPPARKSSTVEYG). The segment covering 67-106 (SSEENGDGDSSEEEGEEEETSNEEENNEDSEGNEDQEAEA) has biased composition (acidic residues). Residue N108 is glycosylated (N-linked (GlcNAc...) asparagine). The span at 139–152 (KAGDAEGKAPKMKE) shows a compositional bias: basic and acidic residues. Residue S153 is modified to Phosphoserine. Residues 153–176 (SDEEEEEEEEEENENEEAEVDENE) show a composition bias toward acidic residues. Polar residues-rich tracts occupy residues 177–188 (QVVNGTSTNSTE) and 249–261 (GTTSPPARKSSTV). N-linked (GlcNAc...) asparagine glycosylation is found at N180 and N185. The Integrin-binding motif signature appears at 289–291 (RGD). Sulfotyrosine is present on residues Y316 and Y317.

Monomer. Interacts with integrins; the interaction promotes cell adhesion.

The protein resides in the secreted. Binds tightly to hydroxyapatite. Appears to form an integral part of the mineralized matrix. Probably important to cell-matrix interaction. Promotes adhesion and migration of various cells via the alpha-V/beta-3 integrin receptor (ITGAV:ITGB3). This Rattus norvegicus (Rat) protein is Integrin-binding sialoprotein (Ibsp).